Here is a 187-residue protein sequence, read N- to C-terminus: Large ribosomal subunit protein uL5 (187 aa).

Belongs to the universal ribosomal protein uL5 family. In terms of assembly, part of the 50S ribosomal subunit; part of the 5S rRNA/L5/L18/L25 subcomplex. Contacts the 5S rRNA and the P site tRNA. Forms a bridge to the 30S subunit in the 70S ribosome.

In terms of biological role, this is one of the proteins that bind and probably mediate the attachment of the 5S RNA into the large ribosomal subunit, where it forms part of the central protuberance. In the 70S ribosome it contacts protein S13 of the 30S subunit (bridge B1b), connecting the 2 subunits; this bridge is implicated in subunit movement. Contacts the P site tRNA; the 5S rRNA and some of its associated proteins might help stabilize positioning of ribosome-bound tRNAs. In Ruegeria sp. (strain TM1040) (Silicibacter sp.), this protein is Large ribosomal subunit protein uL5.